A 270-amino-acid chain; its full sequence is Thiazole synthase (270 aa).

Lys111 (schiff-base intermediate with DXP) is an active-site residue. 1-deoxy-D-xylulose 5-phosphate is bound by residues Gly172, 198 to 199 (AG), and 220 to 221 (NS). The segment at 249–270 (AGRLPTRAQASPSSPTTGKVND) is disordered. Residues 256–270 (AQASPSSPTTGKVND) show a composition bias toward polar residues.

This sequence belongs to the ThiG family. As to quaternary structure, homotetramer. Forms heterodimers with either ThiH or ThiS.

The protein localises to the cytoplasm. The catalysed reaction is [ThiS sulfur-carrier protein]-C-terminal-Gly-aminoethanethioate + 2-iminoacetate + 1-deoxy-D-xylulose 5-phosphate = [ThiS sulfur-carrier protein]-C-terminal Gly-Gly + 2-[(2R,5Z)-2-carboxy-4-methylthiazol-5(2H)-ylidene]ethyl phosphate + 2 H2O + H(+). Its pathway is cofactor biosynthesis; thiamine diphosphate biosynthesis. Catalyzes the rearrangement of 1-deoxy-D-xylulose 5-phosphate (DXP) to produce the thiazole phosphate moiety of thiamine. Sulfur is provided by the thiocarboxylate moiety of the carrier protein ThiS. In vitro, sulfur can be provided by H(2)S. The polypeptide is Thiazole synthase (Synechococcus sp. (strain WH7803)).